The chain runs to 128 residues: MSEKIDQIVEDLKTLTLLEASELVTKIEETFGVDASAAASGGVVMAAAPAVVEEVEEKTEFNLMLDEVPADKKIAVLKVVRSLTGLGLKEAKELVESAPKQIQEGLGKDAAEEAKKQIEAAGGKASLT.

Belongs to the bacterial ribosomal protein bL12 family. As to quaternary structure, homodimer. Part of the ribosomal stalk of the 50S ribosomal subunit. Forms a multimeric L10(L12)X complex, where L10 forms an elongated spine to which 2 to 4 L12 dimers bind in a sequential fashion. Binds GTP-bound translation factors.

It is found in the plastid. Its subcellular location is the chloroplast. Functionally, forms part of the ribosomal stalk which helps the ribosome interact with GTP-bound translation factors. Is thus essential for accurate translation. The chain is Large ribosomal subunit protein bL12c from Phaeodactylum tricornutum (strain CCAP 1055/1).